A 147-amino-acid polypeptide reads, in one-letter code: SPI-1 type 3 secretion system pilotin (147 aa).

The first 15 residues, 1-15, serve as a signal peptide directing secretion; sequence MKKFYSCLPVFLLIG. C16 is lipidated: N-palmitoyl cysteine. C16 carries S-diacylglycerol cysteine lipidation.

Belongs to the InvH family.

It is found in the cell outer membrane. Involved in the synthesis of the type III secretion system (T3SS), also called injectisome, which is used to inject bacterial effector proteins into eukaryotic host cells. Pilot protein that is required for the proper localization of the secretin InvG/SctC in the outer membrane. Necessary for efficient adherence and entry of these organisms into cultured epithelial cells. The polypeptide is SPI-1 type 3 secretion system pilotin (Salmonella typhimurium (strain SL1344)).